Consider the following 86-residue polypeptide: Sodium channel neurotoxin MeuNaTxalpha-5 (86 aa).

Residues 1 to 19 form the signal peptide; the sequence is MNYLILISFALLVITGVES. The region spanning 21–85 is the LCN-type CS-alpha/beta domain; sequence RDAYIAKPHN…VPIRIPGKCH (65 aa). Disulfide bonds link cysteine 31-cysteine 84, cysteine 35-cysteine 57, cysteine 43-cysteine 67, and cysteine 47-cysteine 69. Residue arginine 86 is a propeptide, removed by a carboxypeptidase.

The protein belongs to the long (4 C-C) scorpion toxin superfamily. Sodium channel inhibitor family. Alpha subfamily. Expressed by the venom gland.

Its subcellular location is the secreted. Alpha toxins bind voltage-independently at site-3 of sodium channels (Nav) and inhibit the inactivation of the activated channels, thereby blocking neuronal transmission. This toxin inhibits inactivation of Nav1.6/SCN8A (EC(50)=790 nM) and drosophila DmNav1 (EC(50)=280 nM). The toxin (1 uM) does not significantly shift the midpoint of activation at the two channels, but induces a significant depolarizing shift in the V(1/2) of inactivation of the channels. Has antimicrobial activity. The protein is Sodium channel neurotoxin MeuNaTxalpha-5 of Mesobuthus eupeus (Lesser Asian scorpion).